The following is a 169-amino-acid chain: Large ribosomal subunit protein uL10 (169 aa).

Belongs to the universal ribosomal protein uL10 family. In terms of assembly, part of the ribosomal stalk of the 50S ribosomal subunit. The N-terminus interacts with L11 and the large rRNA to form the base of the stalk. The C-terminus forms an elongated spine to which L12 dimers bind in a sequential fashion forming a multimeric L10(L12)X complex.

In terms of biological role, forms part of the ribosomal stalk, playing a central role in the interaction of the ribosome with GTP-bound translation factors. The polypeptide is Large ribosomal subunit protein uL10 (Rickettsia africae (strain ESF-5)).